The chain runs to 199 residues: NADH-quinone oxidoreductase subunit C (199 aa).

Belongs to the complex I 30 kDa subunit family. NDH-1 is composed of 14 different subunits. Subunits NuoB, C, D, E, F, and G constitute the peripheral sector of the complex.

It localises to the cell inner membrane. It catalyses the reaction a quinone + NADH + 5 H(+)(in) = a quinol + NAD(+) + 4 H(+)(out). In terms of biological role, NDH-1 shuttles electrons from NADH, via FMN and iron-sulfur (Fe-S) centers, to quinones in the respiratory chain. The immediate electron acceptor for the enzyme in this species is believed to be ubiquinone. Couples the redox reaction to proton translocation (for every two electrons transferred, four hydrogen ions are translocated across the cytoplasmic membrane), and thus conserves the redox energy in a proton gradient. The protein is NADH-quinone oxidoreductase subunit C of Cupriavidus pinatubonensis (strain JMP 134 / LMG 1197) (Cupriavidus necator (strain JMP 134)).